The following is a 274-amino-acid chain: Short-chain dehydrogenase/reductase bsc3 (274 aa).

NADP(+) contacts are provided by I14, Y170, K174, I203, and T205. The active-site Proton donor is Y170. K174 functions as the Lowers pKa of active site Tyr in the catalytic mechanism.

Belongs to the short-chain dehydrogenases/reductases (SDR) family.

The protein operates within mycotoxin biosynthesis. Short-chain dehydrogenase/reductase; part of the gene cluster that mediates the biosynthesis of the diterpene glucoside brassicicene C. In the first step of the brassicicene C biosynthesis, the bifunctional diterpene synthase bsc8 that possesses both prenyl transferase and terpene cyclase activity, converts isopentenyl diphosphate and dimethylallyl diphosphate into geranylgeranyl diphosphate (GGDP) that is further converted into fusicocca-2,10(14)-diene, the first precursor for brassicicene C. Fusicocca-2,10(14)-diene is then substrate of cytochrome P450 monooxygenase bsc1 for hydroxylation at the C-8 position. Oxidation at C-16 position to aldehyde is then catalyzed by the cytochrome P450 monooyxygenase bsc7, yielding fusicocca-2,10(14)-diene-8-beta,16-diol. Follows the isomerization of the double bond and reduction of aldehyde to alcohol catalyzed by the short-chain dehydrogenase/reductase bsc3 to yield the diol compound fusicocca-1,10(14)-diene-8 beta,16-diol. The next step is the oxidation at the C-3 position of fusicocca-2,10(14)-diene-8-beta,16-diol catalyzed by the alpha-ketoglutarate dependent dioxygenase bsc9, to produce a triol compound. Methylation of the hydroxy group at position 16 is performed by the methyltransferase bsc6. 16-O-methylation is followed by oxidation at the C-13 position to ketone and an alkyl shift of the methyl group leads to brassicicene C. Although the probable acetyltransferase bsc4 is included in the gene cluster, no acetylation reactions are necessary for brassicicene C biosynthesis. However, the fact that brassicicene E, which is a structurally related compound having an acetoxy group at position 12, was previously isolated from another strain of A.brassicicola suggests that the ATCC 96836 strain might also produce a small amount of brassicicene E. This is Short-chain dehydrogenase/reductase bsc3 from Alternaria brassicicola (Dark leaf spot agent).